The primary structure comprises 944 residues: Isoleucine--tRNA ligase (944 aa).

Residues Pro-58–His-68 carry the 'HIGH' region motif. Glu-563 contacts L-isoleucyl-5'-AMP. Positions Lys-604–Ser-608 match the 'KMSKS' region motif. Position 607 (Lys-607) interacts with ATP. Zn(2+) contacts are provided by Cys-907, Cys-910, Cys-927, and Cys-930.

Belongs to the class-I aminoacyl-tRNA synthetase family. IleS type 1 subfamily. In terms of assembly, monomer. Zn(2+) serves as cofactor.

The protein localises to the cytoplasm. The enzyme catalyses tRNA(Ile) + L-isoleucine + ATP = L-isoleucyl-tRNA(Ile) + AMP + diphosphate. Functionally, catalyzes the attachment of isoleucine to tRNA(Ile). As IleRS can inadvertently accommodate and process structurally similar amino acids such as valine, to avoid such errors it has two additional distinct tRNA(Ile)-dependent editing activities. One activity is designated as 'pretransfer' editing and involves the hydrolysis of activated Val-AMP. The other activity is designated 'posttransfer' editing and involves deacylation of mischarged Val-tRNA(Ile). The polypeptide is Isoleucine--tRNA ligase (Salmonella typhi).